A 694-amino-acid chain; its full sequence is Katanin p80 WD40 repeat-containing subunit B1 (694 aa).

6 WD repeats span residues 18-58 (AHSS…CIMS), 61-100 (GHTS…ILRT), 103-142 (GHKA…CVFR), 145-186 (GHTQ…TEFT), 188-226 (HTSA…MIGS), and 229-269 (GETG…DVVH). 2 disordered regions span residues 319–410 (KPIP…PFPA) and 470–492 (TTSA…STGI). Polar residues predominate over residues 327–349 (ALGTTLRRNYERPTTSCTGQEMK). Residues 350–378 (QSSEADRRSPEGERRSPSSEDEKEDKESS) show a composition bias toward basic and acidic residues. A compositionally biased stretch (low complexity) spans 470 to 481 (TTSASSPSRPVV). Residues 482 to 492 (NTTKPKPSTGI) show a composition bias toward polar residues.

The protein belongs to the WD repeat KATNB1 family. As to quaternary structure, interacts with katna1. This interaction enhances the microtubule binding and severing activity of katna1 and also targets this activity to the centrosome.

The protein resides in the cytoplasm. The protein localises to the cytoskeleton. It localises to the microtubule organizing center. Its subcellular location is the centrosome. It is found in the spindle pole. The protein resides in the spindle. In terms of biological role, participates in a complex which severs microtubules in an ATP-dependent manner. May act to target the enzymatic subunit of this complex to sites of action such as the centrosome. Microtubule severing may promote rapid reorganization of cellular microtubule arrays and the release of microtubules from the centrosome following nucleation. This chain is Katanin p80 WD40 repeat-containing subunit B1 (katnb1), found in Danio rerio (Zebrafish).